We begin with the raw amino-acid sequence, 138 residues long: Basic phospholipase A2 ammodytoxin A (138 aa).

The first 16 residues, 1 to 16, serve as a signal peptide directing secretion; it reads MRTLWIVAVCLIGVEG. Disulfide bonds link Cys42–Cys131, Cys44–Cys60, Cys59–Cys111, Cys65–Cys138, Cys66–Cys104, Cys73–Cys97, and Cys91–Cys102. Residues Tyr43, Gly45, and Gly47 each coordinate Ca(2+). Residue His63 is part of the active site. Asp64 contributes to the Ca(2+) binding site. Asp105 is an active-site residue.

It belongs to the phospholipase A2 family. Group II subfamily. D49 sub-subfamily. In terms of assembly, monomer. Binds to calmodulin, coagulation factor X (F10), M-type PLA2 receptor (R-180). May also bind to 14-3-3 proteins gamma (YWHAG) and epsilon (YWHAE), and R25, a mitochondrial membrane protein. Ca(2+) is required as a cofactor. In terms of tissue distribution, expressed by the venom gland.

It is found in the secreted. Its subcellular location is the host cytoplasm. It localises to the host cytosol. It carries out the reaction a 1,2-diacyl-sn-glycero-3-phosphocholine + H2O = a 1-acyl-sn-glycero-3-phosphocholine + a fatty acid + H(+). Snake venom phospholipase A2 (PLA2) that acts as a presynaptic neurotoxin, an inhibitor of blood coagulation, and has been found to bind with high affinity to intracellular proteins. The response of indirectly stimulated neuromuscular preparations to ammodytoxin (Atx) is triphasic. The first phase, the transient inhibition of the acetylcholine (ACh) release, starts soon after the addition of Atx and lasts for several minutes. This phase is probably independent of Atx enzymatic activity. The effect may be due to the specific binding of the toxin to presynaptic receptors. These receptors, called N-type receptors, are still unidentified. It is noteworthy that a neuronal isoform of the M-type PLA2 receptor (R180) has been identified as a high-affinity receptor for Atx in neuronal plasma membranes. It was demonstrated however that this receptor is not essential for expression of neurotoxicity by Atx. The second phase corresponds to an augmentation of neurotransmitter release. A peak is reached 10-20 minutes after exposure of the preparation to Atx and is followed by a gradual reduction. In this phase, the enzymatic activity of Atx of the mammalian is not significant. It is speculated that the increased release of neurotransmitter in this phase is induced by the interference of Atx with voltage-gated potassium channels. Measurements of ionic currents showed however that voltage-gated potassium channels are not affected by Atx. The third phase of the response of neuromuscular preparations to Atx, which corresponds to a complete and irreversible paralysis, is clearly dependent on the hydrolytic activity of the toxin. In addition to its presynaptic neurotoxicity, Atx shows an anticoagulant activity by binding with high affinity to activated coagulation factor X (F10) thus inhibiting the formation of the prothrombinase complex (FX/FV) and its activity (IC(50) is 20 nM). Surprisingly, Atx was discovered to bind intracellular proteins such as calmodulin (CaM) (IC(50) is 6 nM), 14-3-3 proteins gamma (YWHAG) and epsilon (YWHAE) (by similarity with AtxC), as well as R25 (by similarity with AtxC), a mitochondrial integral membrane protein found in cerebral cortex. These findings raised a doubt about the dogma of the exclusively extracellular action of PLA2s, defended by the potential instability of these molecules in the reducing environment of the eukaryotic cytosol coupled with their possible inability to act as enzymes in this cellular compartment, due to too low concentration of calcium ions. This hypothesis was challenged efficiently by demonstrating the internalization of AtxA into a culture cells, but still remains to be directly demonstrated in vivo. PLA2 catalyzes the calcium-dependent hydrolysis of the 2-acyl groups in 3-sn-phosphoglycerides. In Vipera ammodytes ammodytes (Western sand viper), this protein is Basic phospholipase A2 ammodytoxin A.